The following is a 385-amino-acid chain: UPF0744 protein YSD83 (385 aa).

It belongs to the UPF0744 family.

The protein is UPF0744 protein YSD83 (YSD83) of Saccharomyces paradoxus (Yeast).